A 365-amino-acid polypeptide reads, in one-letter code: tRNA-specific 2-thiouridylase MnmA (365 aa).

ATP is bound by residues 6–13 (AMSGGVDS) and Leu-32. The active-site Nucleophile is Cys-101. Cys-101 and Cys-199 are oxidised to a cystine. An ATP-binding site is contributed by Gly-125. The tract at residues 149 to 151 (KDQ) is interaction with tRNA. The active-site Cysteine persulfide intermediate is the Cys-199.

It belongs to the MnmA/TRMU family.

It is found in the cytoplasm. It catalyses the reaction S-sulfanyl-L-cysteinyl-[protein] + uridine(34) in tRNA + AH2 + ATP = 2-thiouridine(34) in tRNA + L-cysteinyl-[protein] + A + AMP + diphosphate + H(+). Functionally, catalyzes the 2-thiolation of uridine at the wobble position (U34) of tRNA, leading to the formation of s(2)U34. The polypeptide is tRNA-specific 2-thiouridylase MnmA (Corynebacterium efficiens (strain DSM 44549 / YS-314 / AJ 12310 / JCM 11189 / NBRC 100395)).